We begin with the raw amino-acid sequence, 254 residues long: Myeloblastin (254 aa).

An N-terminal signal peptide occupies residues 1-27; it reads MSGSYPSPKGIHPFLLLALVVGGAVQA. Residues 28–29 constitute a propeptide that is removed on maturation; that stretch reads SK. Residues 30-250 form the Peptidase S1 domain; sequence IVGGHEARPH…YVDWIQNVLR (221 aa). A disulfide bridge links Cys58 with Cys74. Catalysis depends on charge relay system residues His73 and Asp120. N-linked (GlcNAc...) asparagine glycans are attached at residues Asn127 and Asn176. 3 disulfides stabilise this stretch: Cys154/Cys211, Cys184/Cys190, and Cys201/Cys226. The active-site Charge relay system is Ser205. Positions 251-254 are excised as a propeptide; the sequence is GAEP.

Belongs to the peptidase S1 family. Elastase subfamily. May form dimers. Interacts with CD177; the interaction tethers PRTN3 to the cell surface; the interaction is direct. Interacts with SERPINB1. Interacts with ADGRG3.

The protein localises to the lysosome. Its subcellular location is the secreted. It is found in the cell membrane. The protein resides in the membrane raft. The catalysed reaction is Hydrolysis of proteins, including elastin, by preferential cleavage: -Ala-|-Xaa- &gt; -Val-|-Xaa-.. Its function is as follows. Serine protease that degrades elastin, fibronectin, laminin, vitronectin, and collagen types I, III, and IV (in vitro). By cleaving and activating receptor F2RL1/PAR-2, enhances endothelial cell barrier function and thus vascular integrity during neutrophil transendothelial migration. May play a role in neutrophil transendothelial migration, probably when associated with CD177. Triggers inflammatory processes in neutrophils by interacting with ADGRG3 upstream of F2RL1/PAR2 activation. This chain is Myeloblastin (Prtn3), found in Mus musculus (Mouse).